Reading from the N-terminus, the 122-residue chain is Large ribosomal subunit protein uL14 (122 aa).

This sequence belongs to the universal ribosomal protein uL14 family. In terms of assembly, part of the 50S ribosomal subunit. Forms a cluster with proteins L3 and L19. In the 70S ribosome, L14 and L19 interact and together make contacts with the 16S rRNA in bridges B5 and B8.

Its function is as follows. Binds to 23S rRNA. Forms part of two intersubunit bridges in the 70S ribosome. The protein is Large ribosomal subunit protein uL14 of Sinorhizobium fredii (strain NBRC 101917 / NGR234).